Here is a 90-residue protein sequence, read N- to C-terminus: Cell division protein CrgA (90 aa).

The interval 1 to 26 (MPKAKVTKNSIAPVSSNPSANRTPVK) is disordered. Polar residues predominate over residues 7-26 (TKNSIAPVSSNPSANRTPVK). 2 helical membrane passes run 38–58 (VIMFAFMLVGLLWLVANYLVG) and 69–89 (AWNYGIGFGLLIIGLLMTMGW).

The protein belongs to the CrgA family.

The protein resides in the cell membrane. Involved in cell division. The chain is Cell division protein CrgA from Corynebacterium efficiens (strain DSM 44549 / YS-314 / AJ 12310 / JCM 11189 / NBRC 100395).